The chain runs to 57 residues: DELTA-limacoditoxin(2)-Dv11 (57 aa).

The signal sequence occupies residues 1 to 24 (MKFAKTFLLLFVVLLLLSIVMAEP).

Belongs to the limacoditoxin-2 (cecropin-like) family. In terms of tissue distribution, expressed by the venom secretory cell of the spine. The spine is a cuticular structure containing a single large nucleated venom-secreting cell at its base. It is an independent unit capable of producing, storing and injecting venom. On the back of D.vulnerans caterpillars, spines are grouped together by 50 to 100 to form scoli, of which there are eight in D.vulnerans.

The protein resides in the secreted. Functionally, peptide that induces pain in mammals and has insecticidal, antibacterial and antiparasitic activities. Induces partially reversible paralysis in D.melanogaster when tested at high doses. Shows a moderate antiparasitic activity against the major pathogenic nematode of ruminants (H.contortus, EC(50)=30.5 uM). Has potent or moderate antibacterial activities against A.baumannii (MIC&lt;0.25 ug/mL) and S.aureus (MIC=16 ug/mL). Has no activity on the other bacteria tested, nor on the fungus C.albicans. Strongly induces the increase of intracellular calcium in mice DRG neurons, which is a proxy for neuronal activation that would occur during nociception. This increase is due to influx of extracellular calcium, suggesting that the peptide forms pore or channel in neuronal cell membranes. In addition, intraplantar injection in mice provokes nocifensive behavior, suggesting a pain-inducing activity. The protein is DELTA-limacoditoxin(2)-Dv11 of Doratifera vulnerans (Mottled cup moth).